A 497-amino-acid chain; its full sequence is Glycerol kinase (497 aa).

Threonine 21 contacts ADP. ATP-binding residues include threonine 21 and threonine 22. Threonine 21 serves as a coordination point for sn-glycerol 3-phosphate. Arginine 25 is a binding site for ADP. Sn-glycerol 3-phosphate is bound by residues arginine 88, glutamate 89, tyrosine 140, and aspartate 244. The glycerol site is built by arginine 88, glutamate 89, tyrosine 140, aspartate 244, and glutamine 245. ADP-binding residues include threonine 266 and glycine 309. ATP contacts are provided by threonine 266, glycine 309, glutamine 313, and glycine 410. The ADP site is built by glycine 410 and asparagine 414.

The protein belongs to the FGGY kinase family.

The catalysed reaction is glycerol + ATP = sn-glycerol 3-phosphate + ADP + H(+). Its pathway is polyol metabolism; glycerol degradation via glycerol kinase pathway; sn-glycerol 3-phosphate from glycerol: step 1/1. With respect to regulation, inhibited by fructose 1,6-bisphosphate (FBP). Its function is as follows. Key enzyme in the regulation of glycerol uptake and metabolism. Catalyzes the phosphorylation of glycerol to yield sn-glycerol 3-phosphate. The protein is Glycerol kinase of Gloeobacter violaceus (strain ATCC 29082 / PCC 7421).